The primary structure comprises 435 residues: Mitochondrial association factor 1 form a1 (435 aa).

Positions methionine 1–glycine 20 are cleaved as a signal peptide. The Vacuolar portion of the chain corresponds to alanine 21–arginine 95. Positions glycine 43 to threonine 88 are disordered. The span at valine 55 to glutamate 64 shows a compositional bias: basic and acidic residues. The helical transmembrane segment at arginine 96–leucine 116 threads the bilayer. Over arginine 117 to aspartate 435 the chain is Cytoplasmic. The interval arginine 120 to proline 162 is disordered. Over residues proline 141–proline 153 the composition is skewed to low complexity.

Interacts with host SAMM50.

The protein resides in the parasitophorous vacuole membrane. In terms of biological role, during host cell infection by tachyzoites, does not play a role in tethering the parasitophorous vacuole to the host mitochondria, probably because it does not bind host mitochondrial import protein TOMM70. The chain is Mitochondrial association factor 1 form a1 from Toxoplasma gondii.